Consider the following 347-residue polypeptide: GMP reductase (347 aa).

108 to 131 (ADFIKLSEILAMSEELNFICIDIA) is an NADP(+) binding site. The K(+) site is built by Gly181 and Gly183. Catalysis depends on Cys186, which acts as the Thioimidate intermediate. An NADP(+)-binding site is contributed by 216–239 (IIGDGGCSCAGDVAKAFGGGADFV).

This sequence belongs to the IMPDH/GMPR family. GuaC type 1 subfamily. In terms of assembly, homotetramer.

The catalysed reaction is IMP + NH4(+) + NADP(+) = GMP + NADPH + 2 H(+). Catalyzes the irreversible NADPH-dependent deamination of GMP to IMP. It functions in the conversion of nucleobase, nucleoside and nucleotide derivatives of G to A nucleotides, and in maintaining the intracellular balance of A and G nucleotides. The sequence is that of GMP reductase from Shewanella halifaxensis (strain HAW-EB4).